Reading from the N-terminus, the 143-residue chain is Hemoglobin anodic subunit alpha (143 aa).

Serine 2 carries the post-translational modification N-acetylserine. Residues 2–143 form the Globin domain; the sequence is SLSAKDMAVV…FTLALSERYR (142 aa). Residue histidine 60 participates in O2 binding. Residue histidine 89 coordinates heme b.

The protein belongs to the globin family. As to quaternary structure, heterotetramer of two alpha chains and two beta chains. In terms of tissue distribution, red blood cells.

Functionally, involved in oxygen transport from gills to the various peripheral tissues. In Anguilla anguilla (European freshwater eel), this protein is Hemoglobin anodic subunit alpha (hba).